A 189-amino-acid chain; its full sequence is Parkinson disease protein 7 homolog (189 aa).

At A2 the chain carries N-acetylalanine; in Protein/nucleic acid deglycase DJ-1, N-terminally processed. S-palmitoyl cysteine attachment occurs at residues C46 and C53. At Y67 the chain carries Phosphotyrosine. The active-site Nucleophile is C106. C106 is subject to Cysteine sulfinic acid (-SO2H); alternate. A lipid anchor (S-palmitoyl cysteine; alternate) is attached at C106. The active site involves H126. Residue K130 forms a Glycyl lysine isopeptide (Lys-Gly) (interchain with G-Cter in SUMO) linkage. Residue K148 is modified to N6-acetyllysine. K182 bears the N6-succinyllysine mark.

It belongs to the peptidase C56 family. Homodimer. Binds EFCAB6/DJBP and PIAS2. Part of a ternary complex containing PARK7, EFCAB6/DJBP and AR. Interacts (via N-terminus) with OTUD7B. Interacts with BBS1, HIPK1, CLCF1 and MTERF. Forms a complex with PINK1 and PRKN. Interacts (via C-terminus) with NCF1; the interaction is enhanced by LPS and modulates NCF1 phosphorylation and membrane translocation. Interacts with NENF. Deglycase activity does not require glutathione as a cofactor, however, glycated glutathione constitutes a PARK7 substrate. is required as a cofactor. Post-translationally, sumoylated on Lys-130 by PIAS2 or PIAS4; which is essential for cell-growth promoting activity and transforming activity. In terms of processing, undergoes cleavage of a C-terminal peptide and subsequent activation of protease activity in response to oxidative stress. As to expression, detected in liver, heart, spleen and testis (at protein level). Detected in liver, heart, spleen, kidney, epididymidis, vas deferens, sperm cells and testis.

It is found in the cell membrane. The protein localises to the cytoplasm. The protein resides in the nucleus. Its subcellular location is the membrane raft. It localises to the mitochondrion. It is found in the endoplasmic reticulum. It catalyses the reaction N(omega)-(1-hydroxy-2-oxopropyl)-L-arginyl-[protein] + H2O = lactate + L-arginyl-[protein] + H(+). It carries out the reaction N(6)-(1-hydroxy-2-oxopropyl)-L-lysyl-[protein] + H2O = lactate + L-lysyl-[protein] + H(+). The enzyme catalyses S-(1-hydroxy-2-oxopropyl)-L-cysteinyl-[protein] + H2O = lactate + L-cysteinyl-[protein] + H(+). The catalysed reaction is N(omega)-(1-hydroxy-2-oxoethyl)-L-arginyl-[protein] + H2O = L-arginyl-[protein] + glycolate + H(+). It catalyses the reaction N(6)-(1-hydroxy-2-oxoethyl)-L-lysyl-[protein] + H2O = glycolate + L-lysyl-[protein] + H(+). It carries out the reaction S-(1-hydroxy-2-oxoethyl)-L-cysteinyl-[protein] + H2O = glycolate + L-cysteinyl-[protein] + H(+). The enzyme catalyses N(2)-(1-hydroxy-2-oxopropyl)-dGTP + H2O = lactate + dGTP + H(+). The catalysed reaction is N(2)-(1-hydroxy-2-oxopropyl)-GTP + H2O = lactate + GTP + H(+). It catalyses the reaction N(2)-(1-hydroxy-2-oxopropyl)-GDP + H2O = lactate + GDP + H(+). It carries out the reaction N(2)-(1-hydroxy-2-oxopropyl)-GMP + H2O = lactate + GMP + H(+). The enzyme catalyses N(2)-(1-hydroxy-2-oxoethyl)-dGTP + H2O = dGTP + glycolate + H(+). The catalysed reaction is N(2)-(1-hydroxy-2-oxoethyl)-GTP + H2O = glycolate + GTP + H(+). It catalyses the reaction N(2)-(1-hydroxy-2-oxoethyl)-GDP + H2O = glycolate + GDP + H(+). It carries out the reaction N(2)-(1-hydroxy-2-oxoethyl)-GMP + H2O = glycolate + GMP + H(+). The enzyme catalyses an N(2)-(1-hydroxy-2-oxopropyl)-guanosine in RNA + H2O = a guanosine in RNA + lactate + H(+). The catalysed reaction is an N(2)-(1-hydroxy-2-oxopropyl)-2'-deoxyguanosine in DNA + H2O = a 2'-deoxyguanosine in DNA + lactate + H(+). It catalyses the reaction an N(2)-(1-hydroxy-2-oxoethyl)-guanosine in RNA + H2O = a guanosine in RNA + glycolate + H(+). It carries out the reaction an N(2)-(1-hydroxy-2-oxoethyl)-2'-deoxyguanosine in DNA + H2O = a 2'-deoxyguanosine in DNA + glycolate + H(+). Functionally, multifunctional protein with controversial molecular function which plays an important role in cell protection against oxidative stress and cell death acting as oxidative stress sensor and redox-sensitive chaperone and protease. It is involved in neuroprotective mechanisms like the stabilization of NFE2L2 and PINK1 proteins, male fertility as a positive regulator of androgen signaling pathway as well as cell growth and transformation through, for instance, the modulation of NF-kappa-B signaling pathway. Has been described as a protein and nucleotide deglycase that catalyzes the deglycation of the Maillard adducts formed between amino groups of proteins or nucleotides and reactive carbonyl groups of glyoxals. But this function is rebuted by other works. As a protein deglycase, repairs methylglyoxal- and glyoxal-glycated proteins, and releases repaired proteins and lactate or glycolate, respectively. Deglycates cysteine, arginine and lysine residues in proteins, and thus reactivates these proteins by reversing glycation by glyoxals. Acts on early glycation intermediates (hemithioacetals and aminocarbinols), preventing the formation of advanced glycation endproducts (AGE) that cause irreversible damage. Also functions as a nucleotide deglycase able to repair glycated guanine in the free nucleotide pool (GTP, GDP, GMP, dGTP) and in DNA and RNA. Is thus involved in a major nucleotide repair system named guanine glycation repair (GG repair), dedicated to reversing methylglyoxal and glyoxal damage via nucleotide sanitization and direct nucleic acid repair. Protects histones from adduction by methylglyoxal, controls the levels of methylglyoxal-derived argininine modifications on chromatin. Able to remove the glycations and restore histone 3, histone glycation disrupts both local and global chromatin architecture by altering histone-DNA interactions as well as histone acetylation and ubiquitination levels. Displays a very low glyoxalase activity that may reflect its deglycase activity. Eliminates hydrogen peroxide and protects cells against hydrogen peroxide-induced cell death. Required for correct mitochondrial morphology and function as well as for autophagy of dysfunctional mitochondria. Plays a role in regulating expression or stability of the mitochondrial uncoupling proteins SLC25A14 and SLC25A27 in dopaminergic neurons of the substantia nigra pars compacta and attenuates the oxidative stress induced by calcium entry into the neurons via L-type channels during pacemaking. Regulates astrocyte inflammatory responses, may modulate lipid rafts-dependent endocytosis in astrocytes and neuronal cells. In pancreatic islets, involved in the maintenance of mitochondrial reactive oxygen species (ROS) levels and glucose homeostasis in an age- and diet dependent manner. Protects pancreatic beta cells from cell death induced by inflammatory and cytotoxic setting. Binds to a number of mRNAs containing multiple copies of GG or CC motifs and partially inhibits their translation but dissociates following oxidative stress. Metal-binding protein able to bind copper as well as toxic mercury ions, enhances the cell protection mechanism against induced metal toxicity. In macrophages, interacts with the NADPH oxidase subunit NCF1 to direct NADPH oxidase-dependent ROS production, and protects against sepsis. The sequence is that of Parkinson disease protein 7 homolog (PARK7) from Mesocricetus auratus (Golden hamster).